A 288-amino-acid polypeptide reads, in one-letter code: Protein PXR1 (288 aa).

A G-patch domain is found at 25 to 72 (QSRFGHKHLMRFGWQPGQGLGTQPVQSMKTHIKVSIKDDNLGLGAKLK). The interval 147–258 (SYSQMEKDSS…TSIPESVSTR (112 aa)) is disordered. A compositionally biased stretch (acidic residues) spans 157-166 (SDEESDDDED). Composition is skewed to basic residues over residues 169–185 (KKHK…KKRK) and 195–214 (KKKK…KDKK). Low complexity predominate over residues 238-256 (RTASIESSTSATSIPESVS).

This sequence belongs to the PINX1 family.

The protein localises to the nucleus. It is found in the nucleolus. Involved in rRNA-processing at A0, A1 and A2 sites and negatively regulates telomerase. This is Protein PXR1 (PXR1) from Candida glabrata (strain ATCC 2001 / BCRC 20586 / JCM 3761 / NBRC 0622 / NRRL Y-65 / CBS 138) (Yeast).